A 295-amino-acid polypeptide reads, in one-letter code: Aquaporin NIP2-1 (295 aa).

The next 2 helical transmembrane spans lie at 49–69 and 83–103; these read VVSEVVSTFLLVFVTCGAAGI and SVAGGLIVTVMIYAVGHISGA. Positions 106 to 108 match the NPA 1 motif; the sequence is NPA. Transmembrane regions (helical) follow at residues 124–146, 164–184, and 192–212; these read VPFYWAAQFTGSICASFVLKAVL, SLVIEIIVTFNMMFVTLAVAT, and LAGLAVGSAVCITSIFAGAVS. Residues 217-219 carry the NPA 2 motif; the sequence is NPA. A helical transmembrane segment spans residues 230–250; sequence LYTGLWIYFLGPVLGTLSGAW.

The protein belongs to the MIP/aquaporin (TC 1.A.8) family. NIP (TC 1.A.8.12) subfamily.

It is found in the membrane. In terms of biological role, aquaporins facilitate the transport of water and small neutral solutes across cell membranes. The chain is Aquaporin NIP2-1 (NIP2-1) from Zea mays (Maize).